Reading from the N-terminus, the 926-residue chain is Tyrosine-protein phosphatase non-receptor type 4 (926 aa).

The region spanning 29 to 312 (VVCNILLLDN…EHHTFFRLDR (284 aa)) is the FERM domain. Disordered stretches follow at residues 379–412 (SDDRLETQSLPSRSPPGTPNHRNSSFTQEATRVR), 429–474 (SEDF…KKNS), and 492–511 (NESFDVPSSPEKSTPNGGIP). Composition is skewed to polar residues over residues 398-408 (NHRNSSFTQEA) and 432-455 (FVSQRSPSSTQANSIVLESSPSQE). The residue at position 474 (serine 474) is a Phosphoserine. The PDZ domain maps to 517–589 (LIKMKPDENG…DQVVLFIKAS (73 aa)). A Tyrosine-protein phosphatase domain is found at 655-911 (VLAQFDQLYR…RFVCEAILKV (257 aa)). Substrate-binding positions include aspartate 820, 852–858 (CSAGIGR), and glutamine 896. Cysteine 852 (phosphocysteine intermediate) is an active-site residue.

Belongs to the protein-tyrosine phosphatase family. Non-receptor class subfamily. As to expression, highly expressed in testis. Specifically expressed in spermatocytes and spermatids within seminiferous tubules (at protein level).

The protein resides in the cell membrane. The protein localises to the cytoplasm. It localises to the cytoskeleton. It carries out the reaction O-phospho-L-tyrosyl-[protein] + H2O = L-tyrosyl-[protein] + phosphate. In terms of biological role, phosphatase that plays a role in immunity, learning, synaptic plasticity or cell homeostasis. Regulates neuronal cell homeostasis by protecting neurons against apoptosis. Negatively regulates TLR4-induced interferon beta production by dephosphorylating adapter TICAM2 and inhibiting subsequent TRAM-TRIF interaction. Dephosphorylates also the immunoreceptor tyrosine-based activation motifs/ITAMs of the TCR zeta subunit and thereby negatively regulates TCR-mediated signaling pathway. May act at junctions between the membrane and the cytoskeleton. This is Tyrosine-protein phosphatase non-receptor type 4 (Ptpn4) from Mus musculus (Mouse).